Here is a 113-residue protein sequence, read N- to C-terminus: Hydrogenase maturation factor HypA (113 aa).

A Ni(2+)-binding site is contributed by His-2. Positions 73, 76, 89, and 92 each coordinate Zn(2+).

The protein belongs to the HypA/HybF family.

Involved in the maturation of [NiFe] hydrogenases. Required for nickel insertion into the metal center of the hydrogenase. This chain is Hydrogenase maturation factor HypA, found in Aeromonas salmonicida (strain A449).